We begin with the raw amino-acid sequence, 120 residues long: Small ribosomal subunit protein uS13 (120 aa).

The interval 94 to 120 (GLPLRGQRTRTNARTRKGPRKAIAGKK) is disordered.

The protein belongs to the universal ribosomal protein uS13 family. As to quaternary structure, part of the 30S ribosomal subunit. Forms a loose heterodimer with protein S19. Forms two bridges to the 50S subunit in the 70S ribosome.

Located at the top of the head of the 30S subunit, it contacts several helices of the 16S rRNA. In the 70S ribosome it contacts the 23S rRNA (bridge B1a) and protein L5 of the 50S subunit (bridge B1b), connecting the 2 subunits; these bridges are implicated in subunit movement. Contacts the tRNAs in the A and P-sites. The protein is Small ribosomal subunit protein uS13 of Azoarcus sp. (strain BH72).